A 372-amino-acid polypeptide reads, in one-letter code: Aminomethyltransferase (372 aa).

The protein belongs to the GcvT family. As to quaternary structure, the glycine cleavage system is composed of four proteins: P, T, L and H.

It carries out the reaction N(6)-[(R)-S(8)-aminomethyldihydrolipoyl]-L-lysyl-[protein] + (6S)-5,6,7,8-tetrahydrofolate = N(6)-[(R)-dihydrolipoyl]-L-lysyl-[protein] + (6R)-5,10-methylene-5,6,7,8-tetrahydrofolate + NH4(+). Its function is as follows. The glycine cleavage system catalyzes the degradation of glycine. The sequence is that of Aminomethyltransferase from Synechocystis sp. (strain ATCC 27184 / PCC 6803 / Kazusa).